Reading from the N-terminus, the 173-residue chain is Shikimate kinase 1 (173 aa).

14-19 contacts ATP; sequence GAGKST. Mg(2+) is bound at residue Ser18. Residues Asp36, Arg60, and Gly82 each coordinate substrate. Arg120 contributes to the ATP binding site. A substrate-binding site is contributed by Arg140. Gln157 contacts ATP.

Belongs to the shikimate kinase family. Monomer. Mg(2+) is required as a cofactor.

The protein resides in the cytoplasm. It carries out the reaction shikimate + ATP = 3-phosphoshikimate + ADP + H(+). The protein operates within metabolic intermediate biosynthesis; chorismate biosynthesis; chorismate from D-erythrose 4-phosphate and phosphoenolpyruvate: step 5/7. Catalyzes the specific phosphorylation of the 3-hydroxyl group of shikimic acid using ATP as a cosubstrate. This is Shikimate kinase 1 from Citrobacter koseri (strain ATCC BAA-895 / CDC 4225-83 / SGSC4696).